We begin with the raw amino-acid sequence, 207 residues long: Thymidylate kinase (207 aa).

Gly7–Ser14 is a binding site for ATP.

Belongs to the thymidylate kinase family.

The enzyme catalyses dTMP + ATP = dTDP + ADP. Phosphorylation of dTMP to form dTDP in both de novo and salvage pathways of dTTP synthesis. The sequence is that of Thymidylate kinase from Chlamydia caviae (strain ATCC VR-813 / DSM 19441 / 03DC25 / GPIC) (Chlamydophila caviae).